A 247-amino-acid polypeptide reads, in one-letter code: Small ribosomal subunit protein uS2 (247 aa).

The protein belongs to the universal ribosomal protein uS2 family.

This Ectopseudomonas mendocina (strain ymp) (Pseudomonas mendocina) protein is Small ribosomal subunit protein uS2.